The sequence spans 231 residues: 5'-methylthioadenosine/S-adenosylhomocysteine nucleosidase (231 aa).

Catalysis depends on Glu-12, which acts as the Proton acceptor. Substrate contacts are provided by residues Gly-78, Met-153, and Met-174–Glu-175. Asp-198 functions as the Proton donor in the catalytic mechanism.

It belongs to the PNP/UDP phosphorylase family. MtnN subfamily.

It carries out the reaction S-adenosyl-L-homocysteine + H2O = S-(5-deoxy-D-ribos-5-yl)-L-homocysteine + adenine. The enzyme catalyses S-methyl-5'-thioadenosine + H2O = 5-(methylsulfanyl)-D-ribose + adenine. The catalysed reaction is 5'-deoxyadenosine + H2O = 5-deoxy-D-ribose + adenine. It functions in the pathway amino-acid biosynthesis; L-methionine biosynthesis via salvage pathway; S-methyl-5-thio-alpha-D-ribose 1-phosphate from S-methyl-5'-thioadenosine (hydrolase route): step 1/2. Its function is as follows. Catalyzes the irreversible cleavage of the glycosidic bond in both 5'-methylthioadenosine (MTA) and S-adenosylhomocysteine (SAH/AdoHcy) to adenine and the corresponding thioribose, 5'-methylthioribose and S-ribosylhomocysteine, respectively. Also cleaves 5'-deoxyadenosine, a toxic by-product of radical S-adenosylmethionine (SAM) enzymes, into 5-deoxyribose and adenine. This is 5'-methylthioadenosine/S-adenosylhomocysteine nucleosidase from Bacillus cereus (strain G9842).